The chain runs to 146 residues: VHWTAEEKQLITGLWGKVNVADCGAEALARLLIVYPWTQRFFASFGNLSSPTAIIGNPMVRAHGKKVLTSFGEAVKNLDNIKNTFAQLSELHCDKLHVDPENFRLLGDILIIVLAAHFTKDFSPDCQAAWQKLVRAVAHALARKYH.

One can recognise a Globin domain in the interval 2-146 (HWTAEEKQLI…VAHALARKYH (145 aa)). Histidine 63 and histidine 92 together coordinate heme b.

The protein belongs to the globin family. Heterotetramer of two alpha chains and two beta chains. Red blood cells.

Functionally, involved in oxygen transport from the lung to the various peripheral tissues. The chain is Hemoglobin subunit beta (HBB) from Aquila chrysaetos (Golden eagle).